The sequence spans 290 residues: Shikimate dehydrogenase (NADP(+)) (290 aa).

Shikimate is bound by residues 20–22 and Thr67; that span reads SLS. The Proton acceptor role is filled by Lys71. Shikimate-binding residues include Asn92 and Asp107. NADP(+) is bound by residues 130–134 and Leu227; that span reads GAGGA. Position 229 (Tyr229) interacts with shikimate. Residue Gly250 coordinates NADP(+).

This sequence belongs to the shikimate dehydrogenase family. As to quaternary structure, homodimer.

It catalyses the reaction shikimate + NADP(+) = 3-dehydroshikimate + NADPH + H(+). Its pathway is metabolic intermediate biosynthesis; chorismate biosynthesis; chorismate from D-erythrose 4-phosphate and phosphoenolpyruvate: step 4/7. Functionally, involved in the biosynthesis of the chorismate, which leads to the biosynthesis of aromatic amino acids. Catalyzes the reversible NADPH linked reduction of 3-dehydroshikimate (DHSA) to yield shikimate (SA). The protein is Shikimate dehydrogenase (NADP(+)) of Syntrophomonas wolfei subsp. wolfei (strain DSM 2245B / Goettingen).